We begin with the raw amino-acid sequence, 163 residues long: Allophycocyanin alpha-B chain (163 aa).

N71 is subject to N4-methylasparagine. C81 contributes to the (2R,3E)-phycocyanobilin binding site.

The protein belongs to the phycobiliprotein family. Contains one covalently linked bilin chromophore.

It localises to the plastid. The protein resides in the chloroplast thylakoid membrane. Functionally, allophycocyanin is a photosynthetic bile pigment-protein complex with maximum absorption at approximately 650 nanometers. The polypeptide is Allophycocyanin alpha-B chain (apcD) (Cyanidium caldarium (Red alga)).